We begin with the raw amino-acid sequence, 101 residues long: Small ribosomal subunit protein uS14 (101 aa).

Residues 1–10 (MAKKSSIEKN) are compositionally biased toward basic and acidic residues. A disordered region spans residues 1-23 (MAKKSSIEKNNRRRKMTKNAAPK). The segment covering 11–23 (NRRRKMTKNAAPK) has biased composition (basic residues).

It belongs to the universal ribosomal protein uS14 family. As to quaternary structure, part of the 30S ribosomal subunit. Contacts proteins S3 and S10.

Its function is as follows. Binds 16S rRNA, required for the assembly of 30S particles and may also be responsible for determining the conformation of the 16S rRNA at the A site. The protein is Small ribosomal subunit protein uS14 of Rhodopseudomonas palustris (strain BisB5).